An 85-amino-acid polypeptide reads, in one-letter code: MAERGLRKVRVGKVTSDKMDKTVVVSIETSEKHPLYKKFVKRTYKLKAHDENNECKIGDIVKVMETRPLSKEKRWRVVEIIERAR.

The protein belongs to the universal ribosomal protein uS17 family. In terms of assembly, part of the 30S ribosomal subunit.

One of the primary rRNA binding proteins, it binds specifically to the 5'-end of 16S ribosomal RNA. This Acetivibrio thermocellus (strain ATCC 27405 / DSM 1237 / JCM 9322 / NBRC 103400 / NCIMB 10682 / NRRL B-4536 / VPI 7372) (Clostridium thermocellum) protein is Small ribosomal subunit protein uS17.